The sequence spans 347 residues: UDP-N-acetylglucosamine--N-acetylmuramyl-(pentapeptide) pyrophosphoryl-undecaprenol N-acetylglucosamine transferase (347 aa).

UDP-N-acetyl-alpha-D-glucosamine-binding positions include 11–13 (TGG), Asn-122, Arg-163, Ser-189, and Gln-279.

This sequence belongs to the glycosyltransferase 28 family. MurG subfamily.

It localises to the cell inner membrane. The enzyme catalyses di-trans,octa-cis-undecaprenyl diphospho-N-acetyl-alpha-D-muramoyl-L-alanyl-D-glutamyl-meso-2,6-diaminopimeloyl-D-alanyl-D-alanine + UDP-N-acetyl-alpha-D-glucosamine = di-trans,octa-cis-undecaprenyl diphospho-[N-acetyl-alpha-D-glucosaminyl-(1-&gt;4)]-N-acetyl-alpha-D-muramoyl-L-alanyl-D-glutamyl-meso-2,6-diaminopimeloyl-D-alanyl-D-alanine + UDP + H(+). The protein operates within cell wall biogenesis; peptidoglycan biosynthesis. Its function is as follows. Cell wall formation. Catalyzes the transfer of a GlcNAc subunit on undecaprenyl-pyrophosphoryl-MurNAc-pentapeptide (lipid intermediate I) to form undecaprenyl-pyrophosphoryl-MurNAc-(pentapeptide)GlcNAc (lipid intermediate II). In Sulfurihydrogenibium sp. (strain YO3AOP1), this protein is UDP-N-acetylglucosamine--N-acetylmuramyl-(pentapeptide) pyrophosphoryl-undecaprenol N-acetylglucosamine transferase.